Consider the following 155-residue polypeptide: MYKIQLLSCIALTLALVANGAPTSSSTGNTMKEVKSLLLDLQLLLEKVKNPENLKLSRMHTFNFYMPKVNATELKHLKCLLEELKLLEEVLDLAPSKNLNTREIKDSMDNIKRIVLELQGSETRFTCEYDDATVKAVEFLNKWITFCQSIYSTMT.

Positions 1-20 are cleaved as a signal peptide; that stretch reads MYKIQLLSCIALTLALVANG. A glycan (O-linked (GalNAc...) threonine) is linked at Thr23. A disulfide bridge connects residues Cys79 and Cys127.

Belongs to the IL-2 family.

It localises to the secreted. In terms of biological role, cytokine produced by activated CD4-positive helper T-cells and to a lesser extend activated CD8-positive T-cells and natural killer (NK) cells that plays pivotal roles in the immune response and tolerance. Binds to a receptor complex composed of either the high-affinity trimeric IL-2R (IL2RA/CD25, IL2RB/CD122 and IL2RG/CD132) or the low-affinity dimeric IL-2R (IL2RB and IL2RG). Interaction with the receptor leads to oligomerization and conformation changes in the IL-2R subunits resulting in downstream signaling starting with phosphorylation of JAK1 and JAK3. In turn, JAK1 and JAK3 phosphorylate the receptor to form a docking site leading to the phosphorylation of several substrates including STAT5. This process leads to activation of several pathways including STAT, phosphoinositide-3-kinase/PI3K and mitogen-activated protein kinase/MAPK pathways. Functions as a T-cell growth factor and can increase NK-cell cytolytic activity as well. Promotes strong proliferation of activated B-cells and subsequently immunoglobulin production. Plays a pivotal role in regulating the adaptive immune system by controlling the survival and proliferation of regulatory T-cells, which are required for the maintenance of immune tolerance. Moreover, participates in the differentiation and homeostasis of effector T-cell subsets, including Th1, Th2, Th17 as well as memory CD8-positive T-cells. The protein is Interleukin-2 (IL2) of Ovis aries (Sheep).